Reading from the N-terminus, the 556-residue chain is Formate--tetrahydrofolate ligase (556 aa).

ATP is bound at residue T65–S72.

Belongs to the formate--tetrahydrofolate ligase family.

The enzyme catalyses (6S)-5,6,7,8-tetrahydrofolate + formate + ATP = (6R)-10-formyltetrahydrofolate + ADP + phosphate. It functions in the pathway one-carbon metabolism; tetrahydrofolate interconversion. This is Formate--tetrahydrofolate ligase from Streptococcus suis (strain 98HAH33).